The chain runs to 383 residues: Izumo sperm-egg fusion protein 1 (383 aa).

The N-terminal stretch at 1–21 (MGLHFTLLLAALANCLCPARL) is a signal peptide. Cystine bridges form between C22–C149, C25–C152, C135–C159, C139–C165, and C182–C233. The Extracellular portion of the chain corresponds to 22 to 306 (CIICDPFVVA…HRPEKKLKSR (285 aa)). The segment at 148–160 (WCNKCEKQMHFCR) is important for interaction with IZUMO1R. Residues 167–251 (ERQIEVHRLE…PATIIYYHVT (85 aa)) form the Ig-like C2-type domain. N204 is a glycosylation site (N-linked (GlcNAc...) asparagine). The helical transmembrane segment at 307–327 (LLILLILGFVVLVASVIASVL) threads the bilayer. The Cytoplasmic segment spans residues 328 to 383 (HFRKTRVKSKNSNVENKTSAAEFKSEAESPQKMGSRKLSQAEFHTDSSDKVEEADN). Positions 335 to 383 (KSKNSNVENKTSAAEFKSEAESPQKMGSRKLSQAEFHTDSSDKVEEADN) are disordered. Positions 337-346 (KNSNVENKTS) are enriched in polar residues. A phosphoserine mark is found at S339, S346, and S366. Residues 370–383 (FHTDSSDKVEEADN) show a composition bias toward basic and acidic residues. A Phosphothreonine modification is found at T372.

Belongs to the Izumo family. In terms of assembly, monomer, homodimer; disulfide-linked and homooligomer; depending on the context. Interacts with IZUMO1R/JUNO. IZUMO1 and IZUMO1R/JUNO form a complex with 1:1 stoichiometry. In gamete recognition, IZUMO1R/JUNO first binds to monomeric IZUMO1. The weak, but specific interaction with IZUMO1R/JUNO induces IZUMO1 homodimerization. The process follows a tight binding phase where IZUMO1 bends the entire structure towards the sperm membrane side through a thiol-disulfide exchange reaction. The molecule no longer binds to IZUMO1R/JUNO and instead binds to a putative second oocyte receptor. Interacts with ACE3. Part of a oolemmal binding multimeric complex (IZUMO1 complex) composed at least of IZUMO1 and GLIPR1L1; the complex assemblage is influenced by the maturation status of the male germ cell. Interacts with GLIPR1L1. Interacts with FREY; the interaction retains IZUMO1 at the endoplasmic reticulum membrane and coordinates IZUMO1 complex assembly. Interacts with WDR54. Forms a complex with SPACA6 and TMEM81 on spermatocyte cell membrane. N-glycosylated. Glycosylation is not essential for fusion and for proper protein trafficking in sperm. In terms of processing, phosphorylated. The cytoplasmic C-terminus is phosphorylated and undergoes phosphorylation changes during epididymal transit. Expressed in sperm (at protein level).

Its subcellular location is the cell membrane. The protein localises to the cytoplasmic vesicle. It localises to the secretory vesicle. It is found in the acrosome membrane. Functionally, essential sperm cell-surface protein required for fertilization by acting as a ligand for IZUMO1R/JUNO receptor on egg. The IZUMO1:IZUMO1R/JUNO interaction is a necessary adhesion event between sperm and egg that is required for fertilization but is not sufficient for cell fusion. The ligand-receptor interaction probably does not act as a membrane 'fusogen'. Plays a critical role in sperm-oolemma binding prior to plasma membrane fusion. Can mediate cell-cell fusion in cultured mammalian cells independently of its binding to IZUMO1R/JUNO. This chain is Izumo sperm-egg fusion protein 1, found in Rattus norvegicus (Rat).